The following is a 596-amino-acid chain: Elongation factor 4 (596 aa).

The 183-residue stretch at 2 to 184 folds into the tr-type G domain; the sequence is KHIRNFSIIA…VIVAKIPPPE (183 aa). GTP contacts are provided by residues 14–19 and 131–134; these read DHGKST and NKID.

Belongs to the TRAFAC class translation factor GTPase superfamily. Classic translation factor GTPase family. LepA subfamily.

It is found in the cell inner membrane. It carries out the reaction GTP + H2O = GDP + phosphate + H(+). Functionally, required for accurate and efficient protein synthesis under certain stress conditions. May act as a fidelity factor of the translation reaction, by catalyzing a one-codon backward translocation of tRNAs on improperly translocated ribosomes. Back-translocation proceeds from a post-translocation (POST) complex to a pre-translocation (PRE) complex, thus giving elongation factor G a second chance to translocate the tRNAs correctly. Binds to ribosomes in a GTP-dependent manner. The chain is Elongation factor 4 from Shewanella sp. (strain W3-18-1).